The primary structure comprises 400 residues: Argininosuccinate synthase (400 aa).

Position 8–16 (8–16 (AYSGGLDTS)) interacts with ATP. Y87 is a binding site for L-citrulline. G117 is a binding site for ATP. L-aspartate-binding residues include T119, N123, and D124. N123 contacts L-citrulline. L-citrulline-binding residues include R127, S175, E260, and Y272.

This sequence belongs to the argininosuccinate synthase family. Type 1 subfamily. As to quaternary structure, homotetramer.

It is found in the cytoplasm. It catalyses the reaction L-citrulline + L-aspartate + ATP = 2-(N(omega)-L-arginino)succinate + AMP + diphosphate + H(+). It participates in amino-acid biosynthesis; L-arginine biosynthesis; L-arginine from L-ornithine and carbamoyl phosphate: step 2/3. The chain is Argininosuccinate synthase from Mycobacterium sp. (strain KMS).